Here is a 204-residue protein sequence, read N- to C-terminus: Large ribosomal subunit protein eL15 (204 aa).

Belongs to the eukaryotic ribosomal protein eL15 family. As to quaternary structure, component of the large ribosomal subunit.

It localises to the cytoplasm. Functionally, component of the large ribosomal subunit. The ribosome is a large ribonucleoprotein complex responsible for the synthesis of proteins in the cell. This is Large ribosomal subunit protein eL15 (rpl15) from Paramisgurnus dabryanus.